The following is a 1025-amino-acid chain: Rho GTPase-activating protein Graf (1025 aa).

In terms of domain architecture, PH spans 271-388 (IFTKRGYLFL…WISAMDGTEP (118 aa)). The 188-residue stretch at 402 to 589 (YHLDEAGFMF…ILIDNYERIF (188 aa)) folds into the Rho-GAP domain. Residues 824–866 (GSASGPQQHPPVQRGLHSYGQTKHYSPLMPTSTSSSNDSVCDS) form a disordered region. Over residues 854 to 866 (TSTSSSNDSVCDS) the composition is skewed to low complexity. One can recognise an SH3 domain in the interval 963–1023 (TGTARVRTLY…PENYVEHLKP (61 aa)).

As to quaternary structure, interacts with Egfr (when ubiquitinated). As to expression, in the adult brain, expressed in the antennal lobe, the subesophageal ganglion and the alpha/beta neurons of the mushroom body.

It localises to the cytoplasm. It is found in the cytosol. The protein resides in the cytoplasmic vesicle. In terms of biological role, GTPase-activating protein for Rho family proteins. Essential component of the CLIC (clathrin-independent carrier)/GEEC (GPI-anchored protein-enriched early endocytic compartment) endocytic pathway. During hematopoiesis, inhibits Egfr-ras-MAPK signaling by promoting Spi-induced Egfr internalization through CLIC/GEEC endocytosis, thereby preventing plasmatocyte overproliferation. Essential for normal mushroom body (MB) development and consequently the formation of olfactory long-term memories. During MD development, required to stop the MB beta-lobe from crossing the brain midline, possibly acting via its role in the CLIC/GEEC endocytic pathway to down-regulate the Egfr-ras-MAPK signaling at the tip of the beta-lobes. Required during embryo cellularization for maintaining and regulating the rate of actomyosin ring constriction. During cellularization, inhibits Rho-GTP levels at the furrow canal tip in a spatiotemporal manner, thus delaying the onset of actomyosin contraction and ensuring appropriate closure of the cells at the base of nuclei after membrane extension. In Drosophila melanogaster (Fruit fly), this protein is Rho GTPase-activating protein Graf.